The primary structure comprises 142 residues: Hemoglobin subunit alpha (142 aa).

Residues 2–142 (VLSAADKGNV…VSTVLTSKYR (141 aa)) enclose the Globin domain. Serine 4 is modified (phosphoserine). N6-succinyllysine is present on residues lysine 8 and lysine 12. Lysine 17 is modified (N6-acetyllysine; alternate). Lysine 17 carries the post-translational modification N6-succinyllysine; alternate. Tyrosine 25 bears the Phosphotyrosine mark. Residue serine 36 is modified to Phosphoserine. The residue at position 41 (lysine 41) is an N6-succinyllysine. A Phosphoserine modification is found at serine 50. Histidine 59 is a binding site for O2. Histidine 88 contributes to the heme b binding site. A Phosphoserine modification is found at serine 103. The residue at position 109 (threonine 109) is a Phosphothreonine. Serine 125 is subject to Phosphoserine. 2 positions are modified to phosphothreonine: threonine 135 and threonine 138. Phosphoserine is present on serine 139.

It belongs to the globin family. As to quaternary structure, heterotetramer of two alpha chains and two beta chains. In terms of tissue distribution, red blood cells.

Its function is as follows. Involved in oxygen transport from the lung to the various peripheral tissues. Functionally, hemopressin acts as an antagonist peptide of the cannabinoid receptor CNR1. Hemopressin-binding efficiently blocks cannabinoid receptor CNR1 and subsequent signaling. This is Hemoglobin subunit alpha (HBA) from Bos gaurus frontalis (Domestic gayal).